The chain runs to 598 residues: Protein unc-93 homolog B1 (598 aa).

The disordered stretch occupies residues 1 to 36 (MEVEPPLYPVAGAAGPQGDEDRHGVPDGPEAPLDEL). 5 consecutive transmembrane segments (helical) span residues 64–84 (VLAA…LLQM), 110–130 (KMLM…PVLI), 132–152 (FFGT…FVST), 160–180 (TLVP…ASMG), and 223–243 (IFYS…IYFL). Residues N251 and N272 are each glycosylated (N-linked (GlcNAc...) asparagine). The next 5 helical transmembrane spans lie at 285–305 (LIVV…MVLG), 343–363 (LVPF…GFAL), 378–398 (LLIA…LGLW), 403–423 (VPLV…FFWA), and 428–448 (VLQH…GSAL). N-linked (GlcNAc...) asparagine glycosylation is present at N449. A run of 2 helical transmembrane segments spans residues 469–489 (FIFT…YLGS) and 495–515 (AKLA…LWME). The disordered stretch occupies residues 524–598 (PRQPRIPKPQ…ALGGDGPEEQ (75 aa)). Over residues 544-554 (EDNSDESDMEG) the composition is skewed to acidic residues. Phosphoserine occurs at positions 547 and 550.

The protein belongs to the unc-93 family. In terms of assembly, interacts with TLR3, TLR5, TLR7, TLR8, TLR9 and TLR13 (probably via transmembrane domain). N-glycosylated.

The protein resides in the endoplasmic reticulum membrane. It is found in the endosome. It localises to the lysosome. Its subcellular location is the cytoplasmic vesicle. The protein localises to the phagosome. Its function is as follows. Plays an important role in innate and adaptive immunity by regulating nucleotide-sensing Toll-like receptor (TLR) signaling. Required for the transport of a subset of TLRs (including TLR3, TLR7 and TLR9) from the endoplasmic reticulum to endolysosomes where they can engage pathogen nucleotides and activate signaling cascades. May play a role in autoreactive B-cells removal. The chain is Protein unc-93 homolog B1 from Mus musculus (Mouse).